Here is a 61-residue protein sequence, read N- to C-terminus: MTEKDSFKKRILFFFFIFFTLFLFNIPKKKKKKIKKNKTTSKSNSNVYGEKKIFKKKKSDI.

A helical transmembrane segment spans residues 10-27 (RILFFFFIFFTLFLFNIP).

It localises to the membrane. This is an uncharacterized protein from Dictyostelium discoideum (Social amoeba).